A 409-amino-acid chain; its full sequence is Tryptophan synthase beta chain (409 aa).

Residue K104 is modified to N6-(pyridoxal phosphate)lysine.

Belongs to the TrpB family. Tetramer of two alpha and two beta chains. Pyridoxal 5'-phosphate is required as a cofactor.

It carries out the reaction (1S,2R)-1-C-(indol-3-yl)glycerol 3-phosphate + L-serine = D-glyceraldehyde 3-phosphate + L-tryptophan + H2O. It participates in amino-acid biosynthesis; L-tryptophan biosynthesis; L-tryptophan from chorismate: step 5/5. Functionally, the beta subunit is responsible for the synthesis of L-tryptophan from indole and L-serine. The sequence is that of Tryptophan synthase beta chain from Trichodesmium erythraeum (strain IMS101).